The chain runs to 101 residues: Large ribosomal subunit protein uL24 (101 aa).

The protein belongs to the universal ribosomal protein uL24 family. In terms of assembly, part of the 50S ribosomal subunit.

One of two assembly initiator proteins, it binds directly to the 5'-end of the 23S rRNA, where it nucleates assembly of the 50S subunit. Its function is as follows. One of the proteins that surrounds the polypeptide exit tunnel on the outside of the subunit. The chain is Large ribosomal subunit protein uL24 from Streptococcus gordonii (strain Challis / ATCC 35105 / BCRC 15272 / CH1 / DL1 / V288).